Consider the following 201-residue polypeptide: MBF complex negative regulatory component yox1 (201 aa).

Positions 1-22 are enriched in polar residues; sequence MSLSDSPSKSGNTGKDLISNNE. Residues 1 to 42 form a disordered region; it reads MSLSDSPSKSGNTGKDLISNNEAKNHEDEETHQKKRRRRTTD. Positions 23–32 are enriched in basic and acidic residues; the sequence is AKNHEDEETH. Positions 33–92 form a DNA-binding region, homeobox; sequence QKKRRRRTTDAEATLLEQYFLKTPKPSLIERQELSKKLKSSMTPRELQIWFQNKRQSLRR.

In terms of assembly, component of the MBF transcription factor complex. Post-translationally, phosphorylated in response to hydroxyurea. Phosphorylation inhibits the repressor activity and is dependent on rad3. However, the regulation of yox1 by rad3 is probably indirect.

The protein localises to the nucleus. In terms of biological role, negative regulatory component of the MBF transcription factor complex involved in cell-cycle G1/S phase-specific gene expression and more particularly DNA replication checkpoint-dependent gene expression. In Schizosaccharomyces pombe (strain 972 / ATCC 24843) (Fission yeast), this protein is MBF complex negative regulatory component yox1 (yox1).